A 512-amino-acid polypeptide reads, in one-letter code: Chromatin assembly factor 1 subunit B (512 aa).

WD repeat units lie at residues 16 to 56, 65 to 105, 126 to 165, and 168 to 207; these read DDHT…SSTK, RHTQ…TTLA, SMGS…LLTQ, and DHSH…KNPK. Polar residues predominate over residues 239-257; it reads DESSGISEPIETSNNNESP. Positions 239–261 are disordered; that stretch reads DESSGISEPIETSNNNESPVSKH. WD repeat units follow at residues 373-413 and 417-458; these read SFSN…PFYR and LHYS…VKSQ. The disordered stretch occupies residues 459–512; sequence HKISLPEKRSASPSSIDDSQDNTAGGPATTTLIPRKVESSKVSKKRIAPTPVYP. Phosphoserine occurs at positions 468, 470, and 473. Residues 469–490 show a composition bias toward polar residues; that stretch reads ASPSSIDDSQDNTAGGPATTTL.

This sequence belongs to the WD repeat HIR1 family. As to quaternary structure, component of chromatin assembly factor 1 (CAF-1), composed of pcf1, pcf2 and pcf3. Interacts with pcn1/PCNA during S-phase. Interacts with swi6 at the G1/S-phase transition and early S-phase, but not in the G2 phase. The CAF-1 complex interacts with histone H3-H4 dimers.

Its subcellular location is the cytoplasm. The protein resides in the nucleus. In terms of biological role, acts as a component of the histone chaperone complex chromatin assembly factor 1 (CAF-1), which assembles histone octamers onto DNA during replication and repair. CAF-1 performs the first step of the nucleosome assembly process, bringing newly synthesized histones H3 and H4 to replicating DNA; histones H2A/H2B can bind to this chromatin precursor subsequent to DNA replication to complete the histone octamer. Plays a role in the maintenance of heterochromatin. The protein is Chromatin assembly factor 1 subunit B of Schizosaccharomyces pombe (strain 972 / ATCC 24843) (Fission yeast).